The primary structure comprises 400 residues: Homoserine O-acetyltransferase (400 aa).

The AB hydrolase-1 domain occupies 64–374 (NAILVCHALT…DKGHDAFLLD (311 aa)). Catalysis depends on Ser-169, which acts as the Nucleophile. Residue Arg-239 participates in substrate binding. Catalysis depends on residues Asp-335 and His-368. Asp-369 serves as a coordination point for substrate.

Belongs to the AB hydrolase superfamily. MetX family. As to quaternary structure, homodimer.

It localises to the cytoplasm. The enzyme catalyses L-homoserine + acetyl-CoA = O-acetyl-L-homoserine + CoA. It participates in amino-acid biosynthesis; L-methionine biosynthesis via de novo pathway; O-acetyl-L-homoserine from L-homoserine: step 1/1. Functionally, transfers an acetyl group from acetyl-CoA to L-homoserine, forming acetyl-L-homoserine. This is Homoserine O-acetyltransferase from Rhodopseudomonas palustris (strain ATCC BAA-98 / CGA009).